The sequence spans 325 residues: G/U mismatch-specific uracil DNA glycosylase (325 aa).

Basic and acidic residues predominate over residues 1 to 11; it reads MNDIETRDTGT. A disordered region spans residues 1–50; that stretch reads MNDIETRDTGTKNDNSSEFNLSVKSHKRKRSFDDENLELEESREETSGGI. Polar residues predominate over residues 12–23; it reads KNDNSSEFNLSV. Residues 34–43 show a composition bias toward acidic residues; the sequence is DENLELEESR.

Belongs to the uracil-DNA glycosylase (UDG) superfamily. TDG/mug family.

It is found in the nucleus. It carries out the reaction Specifically hydrolyzes mismatched double-stranded DNA and polynucleotides, releasing free uracil.. Removes uracil from G/U mispairs in ssDNA. Also corrects G/G mispairs. Does not catalyze the removal of thymine from G/T mispairs. This chain is G/U mismatch-specific uracil DNA glycosylase (thp1), found in Schizosaccharomyces pombe (strain 972 / ATCC 24843) (Fission yeast).